Here is a 357-residue protein sequence, read N- to C-terminus: MAARMAPTPRSSKVVQGLTGLRNLGNTCFMNSILQCLSNTKELRDYCLQNQYLRDLNNNSRMRTALMSEFAKLIQLLWTSSPNDSVSPSEFKTQIQRYAPRFVGYNQQDAQEFLRFLLDGLHGEVNRVLVRPRANADTLDHLPDDEKSRQMWRRYQEREDSRVSDLFVGQLKSSLTCSECGYCSTAFDPFWDLSLPIPKKGYGEVTLMDCLRLFTKEDVLDGDEKPTCCRCKARTRCTKKFSIQKFPKILVLHLKRFSEARIRASKLTTFVNFPLKDLDLREFASQSCNHAVYNLYAVSNHSGTTMGGHYTAYCKSPISSEWHSFNDSRVTPMSSSHVRSSDAYLLFYELASPSSRM.

Residues threonine 19–alanine 351 form the USP domain. Cysteine 28 (nucleophile) is an active-site residue. 4 residues coordinate Zn(2+): cysteine 177, cysteine 180, cysteine 228, and cysteine 231. The active-site Proton acceptor is the histidine 309.

Belongs to the peptidase C19 family. USP2 subfamily. In terms of assembly, homooligomer.

Its subcellular location is the cytoplasm. The protein resides in the perinuclear region. The enzyme catalyses Thiol-dependent hydrolysis of ester, thioester, amide, peptide and isopeptide bonds formed by the C-terminal Gly of ubiquitin (a 76-residue protein attached to proteins as an intracellular targeting signal).. Hydrolase that deubiquitinates polyubiquitinated target proteins such as MDM2, MDM4 and CCND1. Possesses both ubiquitin-specific peptidase and isopeptidase activities. May play a role in the regulation of the circadian clock. This is Ubiquitin carboxyl-terminal hydrolase 2 (USP2) from Gallus gallus (Chicken).